A 469-amino-acid polypeptide reads, in one-letter code: UDP-N-acetylmuramate--L-alanine ligase (469 aa).

Gly-114–Thr-120 is an ATP binding site.

The protein belongs to the MurCDEF family.

The protein resides in the cytoplasm. The enzyme catalyses UDP-N-acetyl-alpha-D-muramate + L-alanine + ATP = UDP-N-acetyl-alpha-D-muramoyl-L-alanine + ADP + phosphate + H(+). The protein operates within cell wall biogenesis; peptidoglycan biosynthesis. In terms of biological role, cell wall formation. The protein is UDP-N-acetylmuramate--L-alanine ligase of Chlorobium phaeovibrioides (strain DSM 265 / 1930) (Prosthecochloris vibrioformis (strain DSM 265)).